The primary structure comprises 288 residues: Eukaryotic translation initiation factor 3 subunit G (288 aa).

Positions 1 to 35 (MSRVANNRDWADDEDLEDSNELPQSTTTTNKDGTQ) are disordered. Residues 11-20 (ADDEDLEDSN) show a composition bias toward acidic residues. The segment covering 21-35 (ELPQSTTTTNKDGTQ) has biased composition (polar residues). One can recognise an RRM domain in the interval 208 to 286 (ATLRVTNVSE…LILRVEFAKK (79 aa)).

It belongs to the eIF-3 subunit G family. As to quaternary structure, component of the eukaryotic translation initiation factor 3 (eIF-3) complex.

Its subcellular location is the cytoplasm. Its function is as follows. RNA-binding component of the eukaryotic translation initiation factor 3 (eIF-3) complex, which is involved in protein synthesis of a specialized repertoire of mRNAs and, together with other initiation factors, stimulates binding of mRNA and methionyl-tRNAi to the 40S ribosome. The eIF-3 complex specifically targets and initiates translation of a subset of mRNAs involved in cell proliferation. This subunit can bind 18S rRNA. The protein is Eukaryotic translation initiation factor 3 subunit G (tif35) of Botryotinia fuckeliana (strain B05.10) (Noble rot fungus).